Consider the following 296-residue polypeptide: MTESFQKLEKIGEGTYGVVYKARERNTNRVVALKKIRLENENEGIPATTIREILLLKNLKHSTIVELSDVIYNNNKMYLVFEYVELDLRRYLDRMSDEGRLVEEGFVRKMSQQLLTAMEYCHSRNIFHRDLKPQNILVDPKENIKLADFGLGRAAGIPLRTYTTEVVTLWYRPPELLLGCKYYDASVDVWSAACIMAEVVLMRPFFPGDSEIDQLFRIFKVLGTPNNSRWSNVENFPNYKVEFPVWDPVDLKTIFRGDPDFVDLISKMLEYDPKMRMTAKNGLSHKYFEGMPLIME.

Residues phenylalanine 5–phenylalanine 288 form the Protein kinase domain. ATP is bound by residues isoleucine 11–valine 19 and lysine 34. Aspartate 130 functions as the Proton acceptor in the catalytic mechanism.

This sequence belongs to the protein kinase superfamily. CMGC Ser/Thr protein kinase family. CDC2/CDKX subfamily.

The protein localises to the nucleus. The catalysed reaction is L-seryl-[protein] + ATP = O-phospho-L-seryl-[protein] + ADP + H(+). It catalyses the reaction L-threonyl-[protein] + ATP = O-phospho-L-threonyl-[protein] + ADP + H(+). Cyclin-dependent kinase that acts as a master regulator of the mitotic and meiotic cell cycles. The protein is Cyclin-dependent kinase 1 of Encephalitozoon cuniculi (strain GB-M1) (Microsporidian parasite).